A 216-amino-acid chain; its full sequence is Ribosomal RNA small subunit methyltransferase G (216 aa).

Residues Gly81, Leu86, 132 to 133, and Arg147 each bind S-adenosyl-L-methionine; that span reads VE.

The protein belongs to the methyltransferase superfamily. RNA methyltransferase RsmG family.

Its subcellular location is the cytoplasm. The enzyme catalyses guanosine(527) in 16S rRNA + S-adenosyl-L-methionine = N(7)-methylguanosine(527) in 16S rRNA + S-adenosyl-L-homocysteine. Its function is as follows. Specifically methylates the N7 position of guanine in position 527 of 16S rRNA. This is Ribosomal RNA small subunit methyltransferase G from Hydrogenovibrio crunogenus (strain DSM 25203 / XCL-2) (Thiomicrospira crunogena).